A 547-amino-acid chain; its full sequence is Germacrene A synthase (547 aa).

Residues Asp300, Asp304, Asp443, and Glu451 each coordinate Mg(2+). The DDXXD motif signature appears at 300 to 304; sequence DDTYD.

This sequence belongs to the terpene synthase family. Tpsa subfamily. Mg(2+) is required as a cofactor. The cofactor is Mn(2+). In terms of tissue distribution, expressed in leaves.

It is found in the plastid. It localises to the chloroplast. The enzyme catalyses (2E,6E)-farnesyl diphosphate = germacrene A + diphosphate. The catalysed reaction is (2E,6E)-farnesyl diphosphate = (1S,2S,4R)-beta-elemene + diphosphate. It participates in secondary metabolite biosynthesis; terpenoid biosynthesis. In terms of biological role, sesquiterpene synthase involved in the biosynthesis of volatile compounds widely used in aromatherapy and folk medicine, and present in culinary herbs. Mediates the conversion of (2E,6E)-farnesyl diphosphate (FPP) into germacrene A and beta-elemene. Not able to use (2E)-geranyl diphosphate (GPP) as substrate. This Lavandula pedunculata subsp. lusitanica (French lavender) protein is Germacrene A synthase.